The primary structure comprises 238 residues: UPF0280 protein Msm_0088 (238 aa).

It belongs to the UPF0280 family.

The protein is UPF0280 protein Msm_0088 of Methanobrevibacter smithii (strain ATCC 35061 / DSM 861 / OCM 144 / PS).